The chain runs to 156 residues: MPRKGPVAKRDVLPDPMYNSKLVTRLINKMMVDGKKGKSQTILYNAFDIVSERTGKEPMEVFEQALKNIMPVLEVRARRVGGANYQVPVEVRPERRTTLGLRWLVNYARLRGEKTMEERLANEILDAANNAGASVKKREDTHKMAEANKAFAHYRW.

Belongs to the universal ribosomal protein uS7 family. Part of the 30S ribosomal subunit. Contacts proteins S9 and S11.

Functionally, one of the primary rRNA binding proteins, it binds directly to 16S rRNA where it nucleates assembly of the head domain of the 30S subunit. Is located at the subunit interface close to the decoding center, probably blocks exit of the E-site tRNA. This Bacillus cereus (strain ZK / E33L) protein is Small ribosomal subunit protein uS7.